The chain runs to 365 residues: IgG receptor FcRn large subunit p51 (365 aa).

The first 21 residues, 1-21 (MGMPLPWALSLLLVLLPQTWG), serve as a signal peptide directing secretion. The tract at residues 22–110 (SETRPPLMYH…KTLEKILNGT (89 aa)) is alpha-1. Residues 22–297 (SETRPPLMYH…VDLDSSARSS (276 aa)) are Extracellular-facing. N-linked (GlcNAc...) asparagine glycans are attached at residues asparagine 108, asparagine 125, asparagine 149, and asparagine 246. Positions 111–200 (YTLQGLLGCE…ERGRRNLEWK (90 aa)) are alpha-2. 2 disulfide bridges follow: cysteine 119–cysteine 182 and cysteine 221–cysteine 275. Residues 201–290 (EPPSMRLKAR…GLAQPLTVDL (90 aa)) are alpha-3. The 88-residue stretch at 202 to 289 (PPSMRLKARP…EGLAQPLTVD (88 aa)) folds into the Ig-like C1-type domain. Residues 291–297 (DSSARSS) are connecting peptide. Residues 298–321 (VPVVGIVLGLLLVVVAIAGGVLLW) form a helical membrane-spanning segment. The Cytoplasmic segment spans residues 322-365 (GRMRSGLPAPWLSLSGDDSGDLLPGGNLPPEAEPQGANAFPATS). Serine 334 is modified (phosphoserine). Residues 343-365 (LLPGGNLPPEAEPQGANAFPATS) are disordered.

It belongs to the immunoglobulin superfamily. FcRn complex consists of two subunits: p51, and p14 which is equivalent to beta-2-microglobulin. It forms an MHC class I-like heterodimer. Interacts with albumin/ALB; this interaction regulates ALB homeostasis. As to expression, intestinal epithelium of suckling rodents. Expressed in neonatal intestine and fetal yolk sac.

The protein resides in the cell membrane. It is found in the endosome membrane. Functionally, cell surface receptor that transfers passive humoral immunity from the mother to the newborn. Binds to the Fc region of monomeric immunoglobulin gamma and mediates its selective uptake from milk. IgG in the milk is bound at the apical surface of the intestinal epithelium. The resultant FcRn-IgG complexes are transcytosed across the intestinal epithelium and IgG is released from FcRn into blood or tissue fluids. Throughout life, contributes to effective humoral immunity by recycling IgG and extending its half-life in the circulation. Mechanistically, monomeric IgG binding to FcRn in acidic endosomes of endothelial and hematopoietic cells recycles IgG to the cell surface where it is released into the circulation. In addition of IgG, regulates homeostasis of the other most abundant circulating protein albumin/ALB. This is IgG receptor FcRn large subunit p51 (Fcgrt) from Mus musculus (Mouse).